The following is a 65-amino-acid chain: Large ribosomal subunit protein bL35 (65 aa).

The protein belongs to the bacterial ribosomal protein bL35 family.

The polypeptide is Large ribosomal subunit protein bL35 (Clostridium kluyveri (strain NBRC 12016)).